The primary structure comprises 363 residues: 3-isopropylmalate dehydrogenase (363 aa).

An NAD(+)-binding site is contributed by 79–92 (GPKWEHLPPNDQPE). Residues R100, R110, R139, and D228 each coordinate substrate. The Mg(2+) site is built by D228, D252, and D256. Position 286–298 (286–298 (GSAPDIAGKNIAN)) interacts with NAD(+).

The protein belongs to the isocitrate and isopropylmalate dehydrogenases family. LeuB type 1 subfamily. In terms of assembly, homodimer. The cofactor is Mg(2+). Requires Mn(2+) as cofactor.

It localises to the cytoplasm. It catalyses the reaction (2R,3S)-3-isopropylmalate + NAD(+) = 4-methyl-2-oxopentanoate + CO2 + NADH. Its pathway is amino-acid biosynthesis; L-leucine biosynthesis; L-leucine from 3-methyl-2-oxobutanoate: step 3/4. Catalyzes the oxidation of 3-carboxy-2-hydroxy-4-methylpentanoate (3-isopropylmalate) to 3-carboxy-4-methyl-2-oxopentanoate. The product decarboxylates to 4-methyl-2 oxopentanoate. This is 3-isopropylmalate dehydrogenase from Vibrio parahaemolyticus serotype O3:K6 (strain RIMD 2210633).